The chain runs to 483 residues: BTB/POZ domain and ankyrin repeat-containing protein COCH (483 aa).

The region spanning 25-105 is the BTB domain; it reads SDVVFSVEGR…LYSGQVSIVP (81 aa). The segment at 111–125 adopts a C2HC NPR-type zinc-finger fold; it reads RPNCGDRGCWHTHCT. 4 residues coordinate Zn(2+): Cys114, Cys119, His121, and Cys124. 4 ANK repeats span residues 249–278, 279–308, 313–342, and 346–380; these read QKIRRMRRALDSSDVELVKLMVMGEGLNLD, EALALPYAVESCSREVVKALLELGAADVNF, TGKTPLHIAAEMVSPDMVAVLLDHHADPNV, and DGVTPLDILRTLTSDFLFKGAVPGLTHIEPNKLRL. Disordered regions lie at residues 395–435 and 450–483; these read EEGN…NSNM and MSTSRLDSGDDDHNSNQREAMNPSMYHHHHSHDY. Residues 398-414 are compositionally biased toward low complexity; sequence NNNNNANNNNTGSSATN. Basic and acidic residues predominate over residues 456 to 465; it reads DSGDDDHNSN.

It belongs to the plant 'ANKYRIN-BTB/POZ' family. 'NOOT-BOP-COCH-like' (NBCL) subfamily. As to quaternary structure, homodimer.

It is found in the nucleus. The protein localises to the cytoplasm. The protein resides in the cell membrane. Its pathway is protein modification; protein ubiquitination. Functionally, may act as a substrate-specific adapter of an E3 ubiquitin-protein ligase complex (CUL3-RBX1-BTB) which mediates the ubiquitination and subsequent proteasomal degradation of target proteins. Transcriptional co-regulator involved in the promotion of leaf and floral meristem fate and determinacy. Promotes normal stipule growth and development. Required for the abscission of senescent organs, probably by regulating the cell wall disorganization in abscission zones (AZs, e.g. pulvini at the base of leaves). Down-regulates UNI expression in primordia of leaves and secondary inflorescences, and thereby controls their sizes and/or structures. Involved in the coordination of the symbiotic nodule developmental program. Promotes the formation of root nodules by interacting directly with APP1 to modulate the expression of the nuclear transcription factor Y subunit (NF-YA1), a key nodulin. Necessary for the robust maintenance of nodule identity throughout the nodule developmental program. The polypeptide is BTB/POZ domain and ankyrin repeat-containing protein COCH (Pisum sativum (Garden pea)).